The sequence spans 354 residues: Uroporphyrinogen decarboxylase (354 aa).

Residues 27 to 31 (RQAGR), D77, Y154, S209, and H327 contribute to the substrate site.

It belongs to the uroporphyrinogen decarboxylase family. As to quaternary structure, homodimer.

It localises to the cytoplasm. It catalyses the reaction uroporphyrinogen III + 4 H(+) = coproporphyrinogen III + 4 CO2. Its pathway is porphyrin-containing compound metabolism; protoporphyrin-IX biosynthesis; coproporphyrinogen-III from 5-aminolevulinate: step 4/4. Functionally, catalyzes the decarboxylation of four acetate groups of uroporphyrinogen-III to yield coproporphyrinogen-III. This Shewanella piezotolerans (strain WP3 / JCM 13877) protein is Uroporphyrinogen decarboxylase.